The following is a 632-amino-acid chain: tRNA uridine 5-carboxymethylaminomethyl modification enzyme MnmG (632 aa).

Residue 13–18 coordinates FAD; sequence GGGHAG. 274–288 is an NAD(+) binding site; the sequence is GPRYCPSIEDKVMRF.

Belongs to the MnmG family. In terms of assembly, homodimer. Heterotetramer of two MnmE and two MnmG subunits. Requires FAD as cofactor.

Its subcellular location is the cytoplasm. NAD-binding protein involved in the addition of a carboxymethylaminomethyl (cmnm) group at the wobble position (U34) of certain tRNAs, forming tRNA-cmnm(5)s(2)U34. This chain is tRNA uridine 5-carboxymethylaminomethyl modification enzyme MnmG, found in Dichelobacter nodosus (strain VCS1703A).